Here is an 855-residue protein sequence, read N- to C-terminus: Inactive rhomboid protein 1 (855 aa).

The disordered stretch occupies residues 1–35 (MSEARRDSTSSLQRKKPPWLKLDIPSAAPATAEEP). The Cytoplasmic segment spans residues 1–411 (MSEARRDSTS…HRPFFTYWLT (411 aa)). Positions 25–35 (PSAAPATAEEP) are enriched in low complexity. Phosphoserine occurs at positions 76 and 176. A phosphothreonine mark is found at Thr-180 and Thr-183. Position 390 is a phosphoserine (Ser-390). The helical transmembrane segment at 412–432 (FVHSLVTILAVCIYGIAPVGF) threads the bilayer. Over 433–655 (SQHETVDSVL…NPEVPDQFYR (223 aa)) the chain is Lumenal. An N-linked (GlcNAc...) asparagine glycan is attached at Asn-583. The chain crosses the membrane as a helical span at residues 656–676 (LWLSLFLHAGILHCLVSICFQ). Residues 677 to 691 (MTVLRDLEKLAGWHR) are Cytoplasmic-facing. Residues 692–712 (IAIIYLLSGVTGNLASAIFLP) form a helical membrane-spanning segment. Residues 713–714 (YR) are Lumenal-facing. The helical transmembrane segment at 715 to 735 (AEVGPAGSQFGILACLFVELF) threads the bilayer. Residues 736-746 (QSWQILARPWR) lie on the Cytoplasmic side of the membrane. Residues 747 to 767 (AFFKLLAVVLFLFTFGLLPWI) form a helical membrane-spanning segment. The Lumenal segment spans residues 768–772 (DNFAH). Residues 773-793 (ISGFISGLFLSFAFLPYISFG) form a helical membrane-spanning segment. At 794-803 (KFDLYRKRCQ) the chain is on the cytoplasmic side. Residues 804-824 (IIVFQVVFLGLLAGLVVLFYV) form a helical membrane-spanning segment. Topologically, residues 825-855 (YPVRCEWCEFLTCIPFTDKFCEKYELDAQLH) are lumenal.

It belongs to the peptidase S54 family. As to quaternary structure, homodimer, or homooligomer. Interacts with TGFA and HBEGF. Interacts with EGF; may retain EGF in the endoplasmic reticulum and regulates its degradation through the endoplasmic reticulum-associated degradation (ERAD). Interacts (via cytoplasmic N-terminus) with FRMD8/iTAP; this interaction leads to mutual protein stabilization. Interacts with ADAM17/TACE.

Its subcellular location is the endoplasmic reticulum membrane. It is found in the golgi apparatus membrane. In terms of biological role, regulates ADAM17 protease, a sheddase of the epidermal growth factor (EGF) receptor ligands and TNF, thereby plays a role in sleep, cell survival, proliferation, migration and inflammation. Does not exhibit any protease activity on its own. In Callithrix jacchus (White-tufted-ear marmoset), this protein is Inactive rhomboid protein 1 (RHBDF1).